A 511-amino-acid chain; its full sequence is 2,3-bisphosphoglycerate-independent phosphoglycerate mutase (511 aa).

Positions 14 and 64 each coordinate Mn(2+). The Phosphoserine intermediate role is filled by Ser64. Substrate-binding positions include His125, 155-156 (RD), Arg187, Arg193, 259-262 (RADR), and Lys333. Positions 400, 404, 441, 442, and 460 each coordinate Mn(2+).

This sequence belongs to the BPG-independent phosphoglycerate mutase family. In terms of assembly, monomer. It depends on Mn(2+) as a cofactor.

It catalyses the reaction (2R)-2-phosphoglycerate = (2R)-3-phosphoglycerate. It functions in the pathway carbohydrate degradation; glycolysis; pyruvate from D-glyceraldehyde 3-phosphate: step 3/5. In terms of biological role, catalyzes the interconversion of 2-phosphoglycerate and 3-phosphoglycerate. This is 2,3-bisphosphoglycerate-independent phosphoglycerate mutase from Pseudomonas entomophila (strain L48).